The following is a 115-amino-acid chain: Aspartate 1-decarboxylase (115 aa).

The Schiff-base intermediate with substrate; via pyruvic acid role is filled by serine 25. The residue at position 25 (serine 25) is a Pyruvic acid (Ser). Threonine 57 lines the substrate pocket. Tyrosine 58 (proton donor) is an active-site residue. 72-74 (GAA) contacts substrate.

Belongs to the PanD family. As to quaternary structure, heterooctamer of four alpha and four beta subunits. Pyruvate is required as a cofactor. In terms of processing, is synthesized initially as an inactive proenzyme, which is activated by self-cleavage at a specific serine bond to produce a beta-subunit with a hydroxyl group at its C-terminus and an alpha-subunit with a pyruvoyl group at its N-terminus.

It localises to the cytoplasm. The enzyme catalyses L-aspartate + H(+) = beta-alanine + CO2. It functions in the pathway cofactor biosynthesis; (R)-pantothenate biosynthesis; beta-alanine from L-aspartate: step 1/1. Catalyzes the pyruvoyl-dependent decarboxylation of aspartate to produce beta-alanine. In Campylobacter fetus subsp. fetus (strain 82-40), this protein is Aspartate 1-decarboxylase.